Reading from the N-terminus, the 552-residue chain is Eukaryotic translation initiation factor 3 subunit D (552 aa).

An RNA gate region spans residues 288–302; sequence DFDLLTVSETANEPP. Residues 525–552 form a disordered region; the sequence is LPDGTFSSDEDEEEDDEDEEDEEEDEDN. Acidic residues predominate over residues 532 to 552; that stretch reads SDEDEEEDDEDEEDEEEDEDN.

The protein belongs to the eIF-3 subunit D family. Component of the eukaryotic translation initiation factor 3 (eIF-3) complex, which is composed of 13 subunits: eif3a, eif3b, eif3c, eif3d, eif3e, eif3f, eif3g, eif3h, eif3i, eif3j, eif3k, eif3l and eif3m.

It localises to the cytoplasm. In terms of biological role, mRNA cap-binding component of the eukaryotic translation initiation factor 3 (eIF-3) complex, which is involved in protein synthesis of a specialized repertoire of mRNAs and, together with other initiation factors, stimulates binding of mRNA and methionyl-tRNAi to the 40S ribosome. The eIF-3 complex specifically targets and initiates translation of a subset of mRNAs involved in cell proliferation. In the eIF-3 complex, eif3d specifically recognizes and binds the 7-methylguanosine cap of a subset of mRNAs. The chain is Eukaryotic translation initiation factor 3 subunit D (eif3d) from Danio rerio (Zebrafish).